Reading from the N-terminus, the 181-residue chain is ATP synthase subunit b (181 aa).

Residues 24-44 (LFPNLPNFIAHLLATIVLVIV) form a helical membrane-spanning segment.

This sequence belongs to the ATPase B chain family. As to quaternary structure, F-type ATPases have 2 components, F(1) - the catalytic core - and F(0) - the membrane proton channel. F(1) has five subunits: alpha(3), beta(3), gamma(1), delta(1), epsilon(1). F(0) has three main subunits: a(1), b(2) and c(10-14). The alpha and beta chains form an alternating ring which encloses part of the gamma chain. F(1) is attached to F(0) by a central stalk formed by the gamma and epsilon chains, while a peripheral stalk is formed by the delta and b chains.

It localises to the cell membrane. In terms of biological role, f(1)F(0) ATP synthase produces ATP from ADP in the presence of a proton or sodium gradient. F-type ATPases consist of two structural domains, F(1) containing the extramembraneous catalytic core and F(0) containing the membrane proton channel, linked together by a central stalk and a peripheral stalk. During catalysis, ATP synthesis in the catalytic domain of F(1) is coupled via a rotary mechanism of the central stalk subunits to proton translocation. Its function is as follows. Component of the F(0) channel, it forms part of the peripheral stalk, linking F(1) to F(0). The polypeptide is ATP synthase subunit b (Mycoplasma capricolum subsp. capricolum (strain California kid / ATCC 27343 / NCTC 10154)).